Here is a 244-residue protein sequence, read N- to C-terminus: tRNA pseudouridine synthase A (244 aa).

Asp-52 functions as the Nucleophile in the catalytic mechanism. A substrate-binding site is contributed by Tyr-110.

It belongs to the tRNA pseudouridine synthase TruA family. Homodimer.

It catalyses the reaction uridine(38/39/40) in tRNA = pseudouridine(38/39/40) in tRNA. Functionally, formation of pseudouridine at positions 38, 39 and 40 in the anticodon stem and loop of transfer RNAs. This Thermoanaerobacter pseudethanolicus (strain ATCC 33223 / 39E) (Clostridium thermohydrosulfuricum) protein is tRNA pseudouridine synthase A.